The primary structure comprises 24 residues: Acetylcholine receptor subunit alpha (24 aa).

The protein belongs to the ligand-gated ion channel (TC 1.A.9) family. Acetylcholine receptor (TC 1.A.9.1) subfamily. Alpha-1/CHRNA1 sub-subfamily. One of the alpha chains that assemble within the acetylcholine receptor, a pentamer of two alpha chains, a beta, a delta, and a gamma or epsilon chains.

It is found in the postsynaptic cell membrane. The protein localises to the cell membrane. It carries out the reaction K(+)(in) = K(+)(out). The enzyme catalyses Na(+)(in) = Na(+)(out). Functionally, upon acetylcholine binding, the AChR responds by an extensive change in conformation that affects all subunits and leads to opening of an ion-conducting channel across the plasma membrane. This Electrophorus electricus (Electric eel) protein is Acetylcholine receptor subunit alpha (chrna1).